Reading from the N-terminus, the 474-residue chain is tRNA-2-methylthio-N(6)-dimethylallyladenosine synthase (474 aa).

The MTTase N-terminal domain maps to 3–120; it reads KKLHIKTWGC…LPEMIDQVQR (118 aa). Cys-12, Cys-49, Cys-83, Cys-157, Cys-161, and Cys-164 together coordinate [4Fe-4S] cluster. In terms of domain architecture, Radical SAM core spans 143-375; the sequence is RADGPTAFVS…QDRITQQAMR (233 aa). The region spanning 378 to 441 is the TRAM domain; it reads RQMLGTVQRI…TNSLRGIFIR (64 aa).

The protein belongs to the methylthiotransferase family. MiaB subfamily. In terms of assembly, monomer. [4Fe-4S] cluster is required as a cofactor.

Its subcellular location is the cytoplasm. It carries out the reaction N(6)-dimethylallyladenosine(37) in tRNA + (sulfur carrier)-SH + AH2 + 2 S-adenosyl-L-methionine = 2-methylsulfanyl-N(6)-dimethylallyladenosine(37) in tRNA + (sulfur carrier)-H + 5'-deoxyadenosine + L-methionine + A + S-adenosyl-L-homocysteine + 2 H(+). Functionally, catalyzes the methylthiolation of N6-(dimethylallyl)adenosine (i(6)A), leading to the formation of 2-methylthio-N6-(dimethylallyl)adenosine (ms(2)i(6)A) at position 37 in tRNAs that read codons beginning with uridine. The polypeptide is tRNA-2-methylthio-N(6)-dimethylallyladenosine synthase (Shewanella denitrificans (strain OS217 / ATCC BAA-1090 / DSM 15013)).